Here is a 368-residue protein sequence, read N- to C-terminus: D-alanine--D-alanine ligase (368 aa).

Residues 151 to 358 enclose the ATP-grasp domain; sequence KKLLAAEGLP…YRTLISTLVD (208 aa). 179–234 serves as a coordination point for ATP; that stretch reads KAELGLPVFVKPARGGSSIGITRVSNWDGLDGAIAHARLHDPKVIVEGAIIGREVE. Mg(2+)-binding residues include aspartate 313, glutamate 325, and asparagine 327.

It belongs to the D-alanine--D-alanine ligase family. Mg(2+) is required as a cofactor. The cofactor is Mn(2+).

It is found in the cytoplasm. The catalysed reaction is 2 D-alanine + ATP = D-alanyl-D-alanine + ADP + phosphate + H(+). The protein operates within cell wall biogenesis; peptidoglycan biosynthesis. Its function is as follows. Cell wall formation. This Rhodococcus erythropolis (strain PR4 / NBRC 100887) protein is D-alanine--D-alanine ligase.